Consider the following 238-residue polypeptide: MSEDLAKQLASYKAQLQQVEAALSGNGENEDLLKLKKDLQEVIELTKDLLSTQPSETLASSDSFASTQPTHSWKVGDKCMAVWSEDGQCYEAEIEEIDEENGTAAITFAGYGNAEVTPLLNLKPVEEGRKAKEDSGNKPMSKKEMIAQQREYKKKKALKKAQRIKELEQEREDQKVKWQQFNNRAYSKNKKGQVKRSIFASPESVTGKVGVGTCGIADKPMTQYQDTSKYNVRHLMPQ.

Residues 72–132 form the Tudor domain; it reads SWKVGDKCMA…KPVEEGRKAK (61 aa). Residues 142–160 carry the Nuclear localization signal motif; that stretch reads KKEMIAQQREYKKKKALKK. Phosphoserine is present on Ser201. N6-acetyllysine is present on Lys219.

Belongs to the SMN family. In terms of assembly, associates with spliceosomes. Associates with U4/U5/U6 tri-snRNP and with U2 snRNP. Interacts (via Tudor domain) with SNRPD3 (via C-terminus); the interaction is direct. As to expression, detected at intermediate levels in skeletal muscle, and at low levels in heart and pancreas.

It localises to the nucleus speckle. Its subcellular location is the nucleus. It is found in the cajal body. In terms of biological role, involved in spliceosome assembly. This Homo sapiens (Human) protein is Survival of motor neuron-related-splicing factor 30 (SMNDC1).